Consider the following 150-residue polypeptide: Large ribosomal subunit protein bL9 (150 aa).

This sequence belongs to the bacterial ribosomal protein bL9 family.

Binds to the 23S rRNA. The protein is Large ribosomal subunit protein bL9 of Neisseria gonorrhoeae (strain ATCC 700825 / FA 1090).